The sequence spans 363 residues: Putative serine/threonine-protein kinase gskl-1 (363 aa).

In terms of domain architecture, Protein kinase spans 20–304 (FGAHKLCGSG…AIDVLKMPLF (285 aa)). ATP contacts are provided by residues 26-34 (CGSGRFSNV) and lysine 50. Catalysis depends on aspartate 146, which acts as the Proton acceptor. A disordered region spans residues 311–363 (PPKKRSNGVEMPNLASYTEMHHKREPETEVVADIQTTEKAEKESDSTNEELED). Residues 346-355 (TTEKAEKESD) are compositionally biased toward basic and acidic residues.

Belongs to the protein kinase superfamily. Ser/Thr protein kinase family. In terms of tissue distribution, expressed during multiple stages of spermatogenesis, in males and hermaphrodites (at protein level).

The protein resides in the cytoplasm. It localises to the cell projection. The protein localises to the pseudopodium. The catalysed reaction is L-seryl-[protein] + ATP = O-phospho-L-seryl-[protein] + ADP + H(+). The enzyme catalyses L-threonyl-[protein] + ATP = O-phospho-L-threonyl-[protein] + ADP + H(+). Functionally, may be an autophosphorylating tyrosine kinase, a bifunctional (serine/tyrosine-specific) protein kinase, or a serine kinase that is a substrate for an associated tyrosine kinase. Acting in concert with putative serine/threonine-protein kinase gskl-2, required for sister chromatid segregation and spermatid budding during male meiosis. Plays a role in regulating female meiosis II, together with gskl-2. Involved in sperm pseudopod formation and function, together with gskl-2. This chain is Putative serine/threonine-protein kinase gskl-1, found in Caenorhabditis elegans.